Reading from the N-terminus, the 224-residue chain is V-type proton ATPase subunit S1-like protein (224 aa).

The chain crosses the membrane as a helical span at residues 147–167; sequence PAFLIGLAMSLILLLVLAYAL.

It belongs to the vacuolar ATPase subunit S1 family.

It is found in the membrane. The polypeptide is V-type proton ATPase subunit S1-like protein (ATP6AP1L) (Homo sapiens (Human)).